A 758-amino-acid polypeptide reads, in one-letter code: Probable serine/threonine-protein kinase HAL5-like (758 aa).

Disordered regions lie at residues 1–170 (MGTV…SADD) and 189–252 (IDNA…HRGR). Positions 22–57 (RSISGSIKSLFKPSSVQNSTPTVSPHESSPPLGNSD) are enriched in polar residues. Positions 58–69 (NLKKLVDTKRAE) are enriched in basic and acidic residues. Residues 129 to 153 (SSPRQSSSTNDRSSITSATSSVTSA) are compositionally biased toward low complexity. A compositionally biased stretch (basic and acidic residues) spans 216 to 226 (DKNFESSEYEI). Polar residues predominate over residues 227–247 (RSNSLSRIHSTPQNESPTVNN). A Protein kinase domain is found at 442 to 744 (KSMGVVLGHG…IDQLLQSPWM (303 aa)). Residues 448–456 (LGHGAYGVV) and Lys485 each bind ATP. Asp595 (proton acceptor) is an active-site residue.

It belongs to the protein kinase superfamily. CAMK Ser/Thr protein kinase family. NPR/HAL subfamily. HAL5 sub-subfamily.

It carries out the reaction L-seryl-[protein] + ATP = O-phospho-L-seryl-[protein] + ADP + H(+). The catalysed reaction is L-threonyl-[protein] + ATP = O-phospho-L-threonyl-[protein] + ADP + H(+). This chain is Probable serine/threonine-protein kinase HAL5-like, found in Vanderwaltozyma polyspora (strain ATCC 22028 / DSM 70294 / BCRC 21397 / CBS 2163 / NBRC 10782 / NRRL Y-8283 / UCD 57-17) (Kluyveromyces polysporus).